Consider the following 317-residue polypeptide: MAAAGDVILEDVPGSVNLFNTLQDQITKVTAHVQDLTQKVRSGIYNTDKGLSFLELKDQLLLFYLQDLTHLMLEKTNGKSIKGNPGILRLVELRTVLEKMRPIDQKLKYQIDKLVKAAVTGSLGENDPLRFKPNPQNLMSKLSEPDERESDSGEEGAEGGVAKKPQSKVKRYIPPRLAPVHYDDTEAEREHRIVERAKKLALSSSTIRELKEQYSDAPEEIREGRAYHMMRHDKEEQHRINHEESMMVRLNMTRKEKARKKRVLSMTSQLNSLTHFSDISALTGGEGRAEDMVPSMKKSKKGPKKSKKKKGFSRRRH.

Disordered regions lie at residues 125-170 (ENDP…SKVK) and 280-317 (SALTGGEGRAEDMVPSMKKSKKGPKKSKKKKGFSRRRH). Over residues 146–157 (DERESDSGEEGA) the composition is skewed to acidic residues. Basic residues predominate over residues 297 to 317 (KKSKKGPKKSKKKKGFSRRRH).

The protein belongs to the SAS10 family. In terms of assembly, part of the small subunit (SSU) processome, composed of more than 70 proteins and the RNA chaperone small nucleolar RNA (snoRNA) U3.

The protein localises to the nucleus. It is found in the nucleolus. It localises to the chromosome. The protein resides in the centromere. Its subcellular location is the cytoplasm. The protein localises to the cell projection. It is found in the axon. It localises to the dendrite. The protein resides in the filopodium. Part of the small subunit (SSU) processome, first precursor of the small eukaryotic ribosomal subunit. During the assembly of the SSU processome in the nucleolus, many ribosome biogenesis factors, an RNA chaperone and ribosomal proteins associate with the nascent pre-rRNA and work in concert to generate RNA folding, modifications, rearrangements and cleavage as well as targeted degradation of pre-ribosomal RNA by the RNA exosome. Its dissociation from the complex determines the transition from state pre-A1 to state pre-A1*. May inhibit mRNA translation. The sequence is that of Neuroguidin-A (ngdn-a) from Xenopus laevis (African clawed frog).